Consider the following 489-residue polypeptide: MTARTLMIQGTGSDVGKSLIVAGLSRAFARRGLRVRPFKPQNMSNNAAVTAEGGEIGRAQALQARAACVAPSVHMNPVLLKPQSETGSQVVVQGRRVGTAKAREYQAWKPRLLSAVLDSFDHLRAEADLVLVEGAGSASEVNLRAGDIANMGFARASGTPVVLLGDIDRGGVIASLVGTKAVLDPDDAAMIRGFLVNRFRGDPSLFADGMALIAARTGWAALGLIPHFPEAARLPAEDVLGLKGSVRPSARPGARVIAVPVLPRIANFDDLDPLRAEPGVSVVLVEPGRPLPAEADLVLLPGSKTTIADLIAFRAEGWDIDLAAHVRRGGRVLGLCGGYQMLGRRIEDPHGIEGEVRAVDGLGLLDVVTVMTPDKRLAAVTGASLPDETPFCGYEMHLGETRGPDAARPLLRFADGRPDGAVSADGRVCGTYVHGLFADDRQRALWLERLGTSSAGEAYEAGIDAVLDRLAEHLERHVACDALLALAAG.

In terms of domain architecture, GATase cobBQ-type spans 254-442 (ARVIAVPVLP…VHGLFADDRQ (189 aa)). The active-site Nucleophile is the cysteine 336. The active site involves histidine 434.

The protein belongs to the CobB/CobQ family. CobQ subfamily.

It functions in the pathway cofactor biosynthesis; adenosylcobalamin biosynthesis. Catalyzes amidations at positions B, D, E, and G on adenosylcobyrinic A,C-diamide. NH(2) groups are provided by glutamine, and one molecule of ATP is hydrogenolyzed for each amidation. This chain is Cobyric acid synthase, found in Methylobacterium nodulans (strain LMG 21967 / CNCM I-2342 / ORS 2060).